Consider the following 209-residue polypeptide: Probable GTP-binding protein EngB (209 aa).

An EngB-type G domain is found at 12 to 203; sequence VSFEIIFVGR…RDRLHEMKRD (192 aa). Residues 20-27, 45-49, 62-65, 142-145, and 179-181 contribute to the GTP site; these read GRSNVGKS, GVTLR, DMPG, NKMD, and ISA. 2 residues coordinate Mg(2+): Ser-27 and Thr-47.

It belongs to the TRAFAC class TrmE-Era-EngA-EngB-Septin-like GTPase superfamily. EngB GTPase family. Requires Mg(2+) as cofactor.

Functionally, necessary for normal cell division and for the maintenance of normal septation. This Methanosarcina barkeri (strain Fusaro / DSM 804) protein is Probable GTP-binding protein EngB.